A 130-amino-acid polypeptide reads, in one-letter code: DNA-directed RNA polymerase subunit omega (130 aa).

Residues 80 to 130 (PEPDTVPLIGSAGASVDADDTEVAPERMTEEELLKGLEGLAPPEEQPEEDE) form a disordered region. Over residues 103 to 114 (APERMTEEELLK) the composition is skewed to basic and acidic residues.

The protein belongs to the RNA polymerase subunit omega family. The RNAP catalytic core consists of 2 alpha, 1 beta, 1 beta' and 1 omega subunit. When a sigma factor is associated with the core the holoenzyme is formed, which can initiate transcription.

It catalyses the reaction RNA(n) + a ribonucleoside 5'-triphosphate = RNA(n+1) + diphosphate. Promotes RNA polymerase assembly. Latches the N- and C-terminal regions of the beta' subunit thereby facilitating its interaction with the beta and alpha subunits. In Rhodopseudomonas palustris (strain BisB18), this protein is DNA-directed RNA polymerase subunit omega.